Here is a 79-residue protein sequence, read N- to C-terminus: Large ribosomal subunit protein bL28 (79 aa).

Belongs to the bacterial ribosomal protein bL28 family.

The protein is Large ribosomal subunit protein bL28 of Blochmanniella floridana.